The following is a 101-amino-acid chain: Urease subunit beta (101 aa).

Belongs to the urease beta subunit family. Heterotrimer of UreA (gamma), UreB (beta) and UreC (alpha) subunits. Three heterotrimers associate to form the active enzyme.

It is found in the cytoplasm. It carries out the reaction urea + 2 H2O + H(+) = hydrogencarbonate + 2 NH4(+). The protein operates within nitrogen metabolism; urea degradation; CO(2) and NH(3) from urea (urease route): step 1/1. This chain is Urease subunit beta, found in Cupriavidus pinatubonensis (strain JMP 134 / LMG 1197) (Cupriavidus necator (strain JMP 134)).